Consider the following 156-residue polypeptide: MAAGLPPVQYSIDTDADLETRLAGKGLKVVEIFSEWCGPCKSVLPTFRRIRLDKDDENALLFLTVCAEKCNFLETAKEHRGKSEPLFLLYRNGQLKARIEGANTPALNQQVLSLTPANADVDDLEENPMYLAKMERERIARGETVKDAKGAKKGKK.

The region spanning 2–116 (AAGLPPVQYS…LNQQVLSLTP (115 aa)) is the Thioredoxin domain. A disulfide bridge links Cys-37 with Cys-40.

In terms of assembly, consists of at least 3 heavy chains (alpha, beta and gamma), 2 intermediate chains and 8 light chains.

The protein localises to the cell projection. It is found in the cilium. It localises to the flagellum. Its subcellular location is the cytoplasm. The protein resides in the cytoskeleton. The protein localises to the flagellum axoneme. May be involved in regulating the redox state of functionally important thiol groups within dynein. This chain is Dynein 16 kDa light chain, flagellar outer arm, found in Chlamydomonas reinhardtii (Chlamydomonas smithii).